The following is a 201-amino-acid chain: Xanthine phosphoribosyltransferase (201 aa).

Positions 20 and 27 each coordinate xanthine. 129-133 is a binding site for 5-phospho-alpha-D-ribose 1-diphosphate; sequence ANGQA. Lys157 is a xanthine binding site.

Belongs to the purine/pyrimidine phosphoribosyltransferase family. Xpt subfamily. As to quaternary structure, homodimer.

It is found in the cytoplasm. It catalyses the reaction XMP + diphosphate = xanthine + 5-phospho-alpha-D-ribose 1-diphosphate. It functions in the pathway purine metabolism; XMP biosynthesis via salvage pathway; XMP from xanthine: step 1/1. Converts the preformed base xanthine, a product of nucleic acid breakdown, to xanthosine 5'-monophosphate (XMP), so it can be reused for RNA or DNA synthesis. This chain is Xanthine phosphoribosyltransferase, found in Shouchella clausii (strain KSM-K16) (Alkalihalobacillus clausii).